The chain runs to 364 residues: UDP-N-acetylglucosamine--N-acetylmuramyl-(pentapeptide) pyrophosphoryl-undecaprenol N-acetylglucosamine transferase (364 aa).

Residues 14–16 (TGG), Asn-126, Arg-163, Ser-190, Ile-246, 265–270 (ALTVSE), and Gln-291 contribute to the UDP-N-acetyl-alpha-D-glucosamine site.

Belongs to the glycosyltransferase 28 family. MurG subfamily.

Its subcellular location is the cell inner membrane. The catalysed reaction is di-trans,octa-cis-undecaprenyl diphospho-N-acetyl-alpha-D-muramoyl-L-alanyl-D-glutamyl-meso-2,6-diaminopimeloyl-D-alanyl-D-alanine + UDP-N-acetyl-alpha-D-glucosamine = di-trans,octa-cis-undecaprenyl diphospho-[N-acetyl-alpha-D-glucosaminyl-(1-&gt;4)]-N-acetyl-alpha-D-muramoyl-L-alanyl-D-glutamyl-meso-2,6-diaminopimeloyl-D-alanyl-D-alanine + UDP + H(+). It functions in the pathway cell wall biogenesis; peptidoglycan biosynthesis. In terms of biological role, cell wall formation. Catalyzes the transfer of a GlcNAc subunit on undecaprenyl-pyrophosphoryl-MurNAc-pentapeptide (lipid intermediate I) to form undecaprenyl-pyrophosphoryl-MurNAc-(pentapeptide)GlcNAc (lipid intermediate II). The chain is UDP-N-acetylglucosamine--N-acetylmuramyl-(pentapeptide) pyrophosphoryl-undecaprenol N-acetylglucosamine transferase from Shewanella loihica (strain ATCC BAA-1088 / PV-4).